Here is a 467-residue protein sequence, read N- to C-terminus: Glutamate--tRNA ligase 2 (467 aa).

Residues 18–28 (PSPTGYLHVGG) carry the 'HIGH' region motif. The short motif at 238 to 242 (PLSKR) is the 'KMSKS' region element. Residue Lys241 participates in ATP binding.

Belongs to the class-I aminoacyl-tRNA synthetase family. Glutamate--tRNA ligase type 1 subfamily. In terms of assembly, monomer.

Its subcellular location is the cytoplasm. The enzyme catalyses tRNA(Glu) + L-glutamate + ATP = L-glutamyl-tRNA(Glu) + AMP + diphosphate. In terms of biological role, catalyzes the attachment of glutamate to tRNA(Glu) in a two-step reaction: glutamate is first activated by ATP to form Glu-AMP and then transferred to the acceptor end of tRNA(Glu). This Fervidobacterium nodosum (strain ATCC 35602 / DSM 5306 / Rt17-B1) protein is Glutamate--tRNA ligase 2.